Reading from the N-terminus, the 219-residue chain is Vesicle-associated membrane protein 712 (219 aa).

Topologically, residues 1-189 are cytoplasmic; it reads MSILYALVAR…NNTVWWRNCK (189 aa). The 105-residue stretch at 7-111 folds into the Longin domain; sequence LVARGTVVLA…AMNDEFSRVL (105 aa). The v-SNARE coiled-coil homology domain occupies 126 to 186; the sequence is TISRIKGEMN…RRFNNTVWWR (61 aa). Residues 190 to 210 traverse the membrane as a helical; Anchor for type IV membrane protein segment; it reads LTLLLILVLLVIIYIGVAFAC. Over 211-219 the chain is Vesicular; it reads HGPTLPSCV.

This sequence belongs to the synaptobrevin family. Expressed in flowers, leaves, stems and roots.

Its subcellular location is the vacuole membrane. The protein resides in the prevacuolar compartment membrane. Involved in the targeting and/or fusion of transport vesicles to their target membrane. In Arabidopsis thaliana (Mouse-ear cress), this protein is Vesicle-associated membrane protein 712.